Reading from the N-terminus, the 1392-residue chain is DNA-directed RNA polymerase subunit beta' (1392 aa).

Zn(2+)-binding residues include C70, C72, C85, and C88. Residues D460, D462, and D464 each contribute to the Mg(2+) site. Zn(2+) is bound by residues C810, C884, C891, and C894.

This sequence belongs to the RNA polymerase beta' chain family. In terms of assembly, the RNAP catalytic core consists of 2 alpha, 1 beta, 1 beta' and 1 omega subunit. When a sigma factor is associated with the core the holoenzyme is formed, which can initiate transcription. It depends on Mg(2+) as a cofactor. Zn(2+) is required as a cofactor.

It catalyses the reaction RNA(n) + a ribonucleoside 5'-triphosphate = RNA(n+1) + diphosphate. DNA-dependent RNA polymerase catalyzes the transcription of DNA into RNA using the four ribonucleoside triphosphates as substrates. The sequence is that of DNA-directed RNA polymerase subunit beta' from Geobacter metallireducens (strain ATCC 53774 / DSM 7210 / GS-15).